The chain runs to 193 residues: E3 ubiquitin-protein ligase RMA2 (193 aa).

The RING-type zinc-finger motif lies at 21–75 (CNICLDQVRDPVVTLCGHLFCWPCIHKWTYASNNSRQRVDQYDHKREPPKCPVCK). Residues 175–192 (LSRVYLFLLCFMFMCLFL) form a helical; Anchor for type IV membrane protein membrane-spanning segment.

Interacts with ERABP1. Barely detected in roots and limited to the root tips. Expressed in leaf hydathodes and in siliques.

It is found in the endoplasmic reticulum membrane. It catalyses the reaction S-ubiquitinyl-[E2 ubiquitin-conjugating enzyme]-L-cysteine + [acceptor protein]-L-lysine = [E2 ubiquitin-conjugating enzyme]-L-cysteine + N(6)-ubiquitinyl-[acceptor protein]-L-lysine.. It participates in protein modification; protein ubiquitination. E3 ubiquitin-protein ligase that promotes the ubiquitination and proteasomal degradation of the auxin-binding protein ERABP1. This Arabidopsis thaliana (Mouse-ear cress) protein is E3 ubiquitin-protein ligase RMA2 (RMA2).